The following is a 143-amino-acid chain: FAD synthase (143 aa).

Residues 11–12 (TF), 16–19 (HPGH), and Asp-94 contribute to the ATP site.

The protein belongs to the archaeal FAD synthase family. As to quaternary structure, homodimer. The cofactor is a divalent metal cation.

It catalyses the reaction FMN + ATP + H(+) = FAD + diphosphate. It participates in cofactor biosynthesis; FAD biosynthesis; FAD from FMN: step 1/1. Catalyzes the transfer of the AMP portion of ATP to flavin mononucleotide (FMN) to produce flavin adenine dinucleotide (FAD) coenzyme. The sequence is that of FAD synthase from Halomicrobium mukohataei (strain ATCC 700874 / DSM 12286 / JCM 9738 / NCIMB 13541) (Haloarcula mukohataei).